The sequence spans 198 residues: MAEKQTAKRNRREEILQSLALMLESSDGSQRITTAKLAASVGVSEAALYRHFPSKTRMFDSLIEFIEDSLITRINLILKDEKDTSTRLRLIVLLILGFGERNPGLTRILTGHALMFEQDRLQGRINQLFERIEAQLRQVLREKRMREGEGYTTDENLLASQLLAFCEGMLSRFVRSEFKYRPTDDFDARWPLIAAQLQ.

Residues asparagine 10–leucine 70 enclose the HTH tetR-type domain. The H-T-H motif DNA-binding region spans threonine 33–phenylalanine 52. Positions glutamate 117 to arginine 144 form a coiled coil.

This sequence belongs to the nucleoid occlusion factor SlmA family. In terms of assembly, homodimer. Interacts with FtsZ.

Its subcellular location is the cytoplasm. It localises to the nucleoid. Its function is as follows. Required for nucleoid occlusion (NO) phenomenon, which prevents Z-ring formation and cell division over the nucleoid. Acts as a DNA-associated cell division inhibitor that binds simultaneously chromosomal DNA and FtsZ, and disrupts the assembly of FtsZ polymers. SlmA-DNA-binding sequences (SBS) are dispersed on non-Ter regions of the chromosome, preventing FtsZ polymerization at these regions. The sequence is that of Nucleoid occlusion factor SlmA from Salmonella paratyphi A (strain ATCC 9150 / SARB42).